The following is a 141-amino-acid chain: Large ribosomal subunit protein uL11 (141 aa).

The protein belongs to the universal ribosomal protein uL11 family. In terms of assembly, part of the ribosomal stalk of the 50S ribosomal subunit. Interacts with L10 and the large rRNA to form the base of the stalk. L10 forms an elongated spine to which L12 dimers bind in a sequential fashion forming a multimeric L10(L12)X complex. One or more lysine residues are methylated.

Forms part of the ribosomal stalk which helps the ribosome interact with GTP-bound translation factors. The chain is Large ribosomal subunit protein uL11 from Synechococcus sp. (strain JA-2-3B'a(2-13)) (Cyanobacteria bacterium Yellowstone B-Prime).